Consider the following 911-residue polypeptide: Isoleucine--tRNA ligase (911 aa).

Positions 57 to 67 (PYANGHIHIGH) match the 'HIGH' region motif. Residue Glu-564 coordinates L-isoleucyl-5'-AMP. Residues 605 to 609 (KMSKS) carry the 'KMSKS' region motif. Residue Lys-608 coordinates ATP. The Zn(2+) site is built by Cys-887, Cys-890, Cys-902, and Cys-905.

Belongs to the class-I aminoacyl-tRNA synthetase family. IleS type 1 subfamily. As to quaternary structure, monomer. Requires Zn(2+) as cofactor.

The protein resides in the cytoplasm. The enzyme catalyses tRNA(Ile) + L-isoleucine + ATP = L-isoleucyl-tRNA(Ile) + AMP + diphosphate. Its function is as follows. Catalyzes the attachment of isoleucine to tRNA(Ile). As IleRS can inadvertently accommodate and process structurally similar amino acids such as valine, to avoid such errors it has two additional distinct tRNA(Ile)-dependent editing activities. One activity is designated as 'pretransfer' editing and involves the hydrolysis of activated Val-AMP. The other activity is designated 'posttransfer' editing and involves deacylation of mischarged Val-tRNA(Ile). The protein is Isoleucine--tRNA ligase of Nautilia profundicola (strain ATCC BAA-1463 / DSM 18972 / AmH).